A 1010-amino-acid polypeptide reads, in one-letter code: Pre-mRNA-splicing factor cwc22 (1010 aa).

The span at 1-10 (MASADMSPSR) shows a compositional bias: polar residues. The tract at residues 1-166 (MASADMSPSR…RTPTPPPVAV (166 aa)) is disordered. A compositionally biased stretch (low complexity) spans 18–28 (RSPSPRTQSPS). Composition is skewed to basic and acidic residues over residues 29 to 39 (PRDEDGSRSPG) and 65 to 78 (PRRD…DQPH). A compositionally biased stretch (low complexity) spans 84–109 (RSPTPRSQSPSRRSVRSPSPRQGSPA). Positions 142-158 (RHRDAGGDYRPVRKERT) are enriched in basic and acidic residues. Residues 222–405 (KKSVNGLVNK…EVLFQVRKDK (184 aa)) enclose the MIF4G domain. The tract at residues 466-498 (GEASDDDEDDDDDDESESGSESEDEEQKALEIK) is disordered. Residues 468–491 (ASDDDEDDDDDDESESGSESEDEE) show a composition bias toward acidic residues. In terms of domain architecture, MI spans 507–623 (NLRRTIYLSI…GWHVFSVIHL (117 aa)). Residues 708 to 1010 (LPAPPADSDS…SPVAKRGRVD (303 aa)) form a disordered region. The segment covering 718–732 (ESVSSYSSYSSYSSR) has biased composition (low complexity). A compositionally biased stretch (basic residues) spans 753 to 775 (PPRRGRGRSYSRTPSRSRSRSRS). A compositionally biased stretch (low complexity) spans 776–787 (YSRSVSKSVSRS). Composition is skewed to basic residues over residues 834–846 (RRGR…RSRS) and 899–910 (RLRRGSYSRSRS). Over residues 911-935 (RSPIPIRGNGPAGRDTGRAGPAPAR) the composition is skewed to low complexity. The span at 936–948 (GGRRNRSYSRSRT) shows a compositional bias: basic residues. Low complexity predominate over residues 961–973 (SRRVVSRSPSPVV). Basic residues predominate over residues 976-1010 (NKRRRSYSSSRSRSRSSSRSRYRSRSPVAKRGRVD).

The protein belongs to the CWC22 family. Associated with the spliceosome.

It is found in the cytoplasm. The protein localises to the nucleus. Functionally, involved in pre-mRNA splicing. In Neurospora crassa (strain ATCC 24698 / 74-OR23-1A / CBS 708.71 / DSM 1257 / FGSC 987), this protein is Pre-mRNA-splicing factor cwc22 (msp-1).